Here is a 147-residue protein sequence, read N- to C-terminus: uncharacterized protein (147 aa).

The Extracellular segment spans residues 1 to 16 (MDHRAAFGYFSNACFK). Residues 17 to 37 (VMLFSSLLASFASSVAFISLI) traverse the membrane as a helical segment. Residues 38-105 (TFSLSSSESP…FEAAFFLLTN (68 aa)) lie on the Cytoplasmic side of the membrane. The chain crosses the membrane as a helical span at residues 106–126 (EMIFFILYYFFSCLMFFYVAS). At 127–147 (ERNTNPKILQTINTKPLYIKN) the chain is on the extracellular side.

The protein resides in the membrane. This is an uncharacterized protein from Saccharomyces cerevisiae (strain ATCC 204508 / S288c) (Baker's yeast).